The following is a 566-amino-acid chain: Protein OBERON 1 (566 aa).

The span at 1–10 (MGTSSGSNLP) shows a compositional bias: polar residues. Positions 1-79 (MGTSSGSNLP…KTGPDSHDQH (79 aa)) are disordered. Residues 18 to 29 (QQLQTSLSLVSS) are compositionally biased toward low complexity. Positions 47–60 (ESASSQETWPTSKS) are enriched in polar residues. Basic and acidic residues predominate over residues 64–79 (RKTDSGKTGPDSHDQH). A PHD-type zinc finger spans residues 225–289 (LCMCVICNKF…LFKCRACNHT (65 aa)). Residues 407–522 (EEKTRMYKKA…LFEKIKEQES (116 aa)) adopt a coiled-coil conformation. Residues 545–566 (YNASSPRVDPRSNQRNPFRSNP) are disordered. Residues 555–566 (RSNQRNPFRSNP) are compositionally biased toward polar residues.

Self-interacts. Interacts with OBE2, OBE3 and OBE4. Binds to VPg of pea seed borne mosaic virus (PSbMV), turnip mosaic virus (TuMV) and lettuce mosaic virus (LMV), but not with VPg of tobacco etch virus (TEV), cowpea mosaic virus (CPMV), tomato black ring virus (TBRV) and grapevine fan leaf virus (GFLV). Interacts with RBL. In terms of tissue distribution, expressed in roots, seedlings, stems, leaves, flowers and siliques, especially in the vasculature.

It localises to the nucleus. The protein localises to the nucleoplasm. Functionally, probable transcription factor that acts together with OBE2 for the maintenance and/or establishment of both the shoot and root meristems, probably by controlling the expression of the meristem genes such as WUS, PLT1 and PLT2 and of genes required for auxin responses. Promotes cell meristematic activity via the WUSCHEL-CLAVATA pathway. Involved in the development of the basal pole and in auxin-mediated root and vascular development in the embryo. Confers sensitivity to turnip mosaic virus (TuMV) probably by promoting viral movement and multiplication via interaction with TuMV VPg. In Arabidopsis thaliana (Mouse-ear cress), this protein is Protein OBERON 1.